The sequence spans 490 residues: Mitochondria-eating protein (490 aa).

The stretch at 112–210 (IRELSSVHES…RILRDEVSFL (99 aa)) forms a coiled coil. Composition is skewed to low complexity over residues 224–241 (SRSP…SPVR) and 456–490 (RSSS…SSRL). Disordered regions lie at residues 224–253 (SRSP…LTSS) and 455–490 (SRSS…SSRL).

This sequence belongs to the MIEAP family.

It is found in the cytoplasm. Its subcellular location is the mitochondrion outer membrane. The protein localises to the mitochondrion matrix. In terms of biological role, key regulator of mitochondrial quality that mediates the repairing or degradation of unhealthy mitochondria in response to mitochondrial damage. Mediator of mitochondrial protein catabolic process (also named MALM) by mediating the degradation of damaged proteins inside mitochondria by promoting the accumulation in the mitochondrial matrix of hydrolases that are characteristic of the lysosomal lumen. Also involved in mitochondrion degradation of damaged mitochondria by promoting the formation of vacuole-like structures (named MIV), which engulf and degrade unhealthy mitochondria by accumulating lysosomes. Binds cardiolipin. May form molecular condensates (non-membrane-bounded organelles) within mitochondria that compartmentalize and promote cardiolipin metabolism. The protein is Mitochondria-eating protein (spata18) of Danio rerio (Zebrafish).